Reading from the N-terminus, the 459-residue chain is Cysteine--tRNA ligase (459 aa).

C28 provides a ligand contact to Zn(2+). A 'HIGH' region motif is present at residues I30–H40. Zn(2+) contacts are provided by C209, H234, and E238. A 'KMSKS' region motif is present at residues K266–S270. K269 contributes to the ATP binding site.

Belongs to the class-I aminoacyl-tRNA synthetase family. Monomer. The cofactor is Zn(2+).

The protein resides in the cytoplasm. The enzyme catalyses tRNA(Cys) + L-cysteine + ATP = L-cysteinyl-tRNA(Cys) + AMP + diphosphate. This chain is Cysteine--tRNA ligase (cysS), found in Pasteurella multocida (strain Pm70).